The sequence spans 264 residues: 3-methyl-2-oxobutanoate hydroxymethyltransferase (264 aa).

Asp45 and Asp84 together coordinate Mg(2+). 3-methyl-2-oxobutanoate-binding positions include 45 to 46 (DS), Asp84, and Lys112. Glu114 lines the Mg(2+) pocket. The active-site Proton acceptor is Glu181.

This sequence belongs to the PanB family. Homodecamer; pentamer of dimers. It depends on Mg(2+) as a cofactor.

It localises to the cytoplasm. It carries out the reaction 3-methyl-2-oxobutanoate + (6R)-5,10-methylene-5,6,7,8-tetrahydrofolate + H2O = 2-dehydropantoate + (6S)-5,6,7,8-tetrahydrofolate. Its pathway is cofactor biosynthesis; (R)-pantothenate biosynthesis; (R)-pantoate from 3-methyl-2-oxobutanoate: step 1/2. Catalyzes the reversible reaction in which hydroxymethyl group from 5,10-methylenetetrahydrofolate is transferred onto alpha-ketoisovalerate to form ketopantoate. In Escherichia coli (strain K12 / MC4100 / BW2952), this protein is 3-methyl-2-oxobutanoate hydroxymethyltransferase.